The sequence spans 603 residues: Aquaporin-2 (603 aa).

A helical transmembrane segment spans residues 40 to 70 (SLKKYKYNLFFEFIGSFLFVFFISIYMLNSN). Basic and acidic residues-rich tracts occupy residues 135–149 (NNKS…DDKI) and 156–190 (EFEK…EDPK). The disordered stretch occupies residues 135 to 200 (NNKSKREVER…NISNKNENYD (66 aa)). Polar residues predominate over residues 191–200 (NISNKNENYD). 5 consecutive transmembrane segments (helical) span residues 282-299 (HAIY…FILL), 321-346 (FALS…AHLY), 360-393 (IIKT…EENK), 442-471 (NKYI…VTNT), and 509-542 (ITKI…FLSL).

This sequence belongs to the MIP/aquaporin (TC 1.A.8) family.

The protein resides in the endomembrane system. It carries out the reaction H2O(in) = H2O(out). It catalyses the reaction glycerol(in) = glycerol(out). Its function is as follows. Required for sporozoite development in the mosquito vector. The chain is Aquaporin-2 from Plasmodium falciparum (isolate NF54).